We begin with the raw amino-acid sequence, 59 residues long: Large ribosomal subunit protein bL32 (59 aa).

The protein belongs to the bacterial ribosomal protein bL32 family.

The protein is Large ribosomal subunit protein bL32 of Synechococcus sp. (strain RCC307).